Reading from the N-terminus, the 55-residue chain is uncharacterized protein (55 aa).

The chain crosses the membrane as a helical span at residues 7-24; the sequence is VALVGAVLATLTACTGHI.

The protein localises to the membrane. This is an uncharacterized protein from Escherichia coli O157:H7.